Here is a 121-residue protein sequence, read N- to C-terminus: Heimdall profilin (121 aa).

It belongs to the Asgard profilin family.

Its subcellular location is the cytoplasm. It localises to the cytoskeleton. In terms of biological role, binds to actin and affects the structure of the cytoskeleton. At high concentrations inhibits spontaneous rabbit actin nucleation. This strongly suggests this archaea has a profilin-regulated actin system, and actin-type genes can be identified in this organism. In Heimdallarchaeota archaeon (strain LC_2), this protein is Heimdall profilin.